The following is a 213-amino-acid chain: Holliday junction branch migration complex subunit RuvA (213 aa).

The domain I stretch occupies residues 1–64; sequence MIARLVGFLV…EDSITLFGFA (64 aa). The tract at residues 65 to 143 is domain II; sequence SYLERDWFRL…AIALFSSAKG (79 aa). The interval 144-159 is flexible linker; it reads DHLAVEDISQPAASAH. The segment at 160–213 is domain III; it reads HAGNFMADAVSALLNLGFKPAEAQRVVQLASEELGDQATLDSLVRLALRLSSKH.

Belongs to the RuvA family. As to quaternary structure, homotetramer. Forms an RuvA(8)-RuvB(12)-Holliday junction (HJ) complex. HJ DNA is sandwiched between 2 RuvA tetramers; dsDNA enters through RuvA and exits via RuvB. An RuvB hexamer assembles on each DNA strand where it exits the tetramer. Each RuvB hexamer is contacted by two RuvA subunits (via domain III) on 2 adjacent RuvB subunits; this complex drives branch migration. In the full resolvosome a probable DNA-RuvA(4)-RuvB(12)-RuvC(2) complex forms which resolves the HJ.

Its subcellular location is the cytoplasm. In terms of biological role, the RuvA-RuvB-RuvC complex processes Holliday junction (HJ) DNA during genetic recombination and DNA repair, while the RuvA-RuvB complex plays an important role in the rescue of blocked DNA replication forks via replication fork reversal (RFR). RuvA specifically binds to HJ cruciform DNA, conferring on it an open structure. The RuvB hexamer acts as an ATP-dependent pump, pulling dsDNA into and through the RuvAB complex. HJ branch migration allows RuvC to scan DNA until it finds its consensus sequence, where it cleaves and resolves the cruciform DNA. The chain is Holliday junction branch migration complex subunit RuvA from Zymomonas mobilis subsp. mobilis (strain ATCC 31821 / ZM4 / CP4).